A 200-amino-acid polypeptide reads, in one-letter code: Small ribosomal subunit protein uS4 (200 aa).

The tract at residues 22–43 (TGKELERRPYAPGQHGPTQRKK) is disordered. The S4 RNA-binding domain maps to 92–170 (QRLDNIVYRL…VPEYVTFDAE (79 aa)).

It belongs to the universal ribosomal protein uS4 family. Part of the 30S ribosomal subunit. Contacts protein S5. The interaction surface between S4 and S5 is involved in control of translational fidelity.

Its function is as follows. One of the primary rRNA binding proteins, it binds directly to 16S rRNA where it nucleates assembly of the body of the 30S subunit. With S5 and S12 plays an important role in translational accuracy. The polypeptide is Small ribosomal subunit protein uS4 (Listeria innocua serovar 6a (strain ATCC BAA-680 / CLIP 11262)).